A 410-amino-acid chain; its full sequence is Protein BTN2 (410 aa).

Disordered regions lie at residues 223-264 (INEP…TKED) and 276-410 (MQEE…IEEI). Composition is skewed to basic and acidic residues over residues 233–264 (SKID…TKED) and 276–311 (MQEE…KESL). Residues 243–330 (NMSESLKEEE…QQKKLQNSKS (88 aa)) are a coiled coil. The span at 334–362 (SEIEASNKNNNSNSGSAESDNESINSDSD) shows a compositional bias: low complexity. The segment covering 364–373 (TLDFSVSGNT) has biased composition (polar residues).

As to quaternary structure, interacts with RHB1, IST2, TDA3 and YIF1.

Its subcellular location is the cytoplasm. It is found in the late endosome. V-SNARE binding protein that facilitates specific protein retrieval from a late endosome to the Golgi. Modulates the rate of arginine uptake. Involved in pH homeostasis. Required for the correct localization of IST2. May be involved in ion homeostasis together with IST2. This is Protein BTN2 (BTN2) from Saccharomyces cerevisiae (strain ATCC 204508 / S288c) (Baker's yeast).